A 79-amino-acid polypeptide reads, in one-letter code: Small ribosomal subunit protein bS18 (79 aa).

It belongs to the bacterial ribosomal protein bS18 family. Part of the 30S ribosomal subunit. Forms a tight heterodimer with protein bS6.

In terms of biological role, binds as a heterodimer with protein bS6 to the central domain of the 16S rRNA, where it helps stabilize the platform of the 30S subunit. This Streptococcus agalactiae serotype Ia (strain ATCC 27591 / A909 / CDC SS700) protein is Small ribosomal subunit protein bS18.